The chain runs to 275 residues: NAD kinase (275 aa).

Catalysis depends on Asp66, which acts as the Proton acceptor. NAD(+) is bound by residues 66 to 67 (DG), His71, 135 to 136 (NE), Lys146, Arg163, Asp165, and 176 to 181 (TAYAMS).

Belongs to the NAD kinase family. It depends on a divalent metal cation as a cofactor.

The protein localises to the cytoplasm. It catalyses the reaction NAD(+) + ATP = ADP + NADP(+) + H(+). Involved in the regulation of the intracellular balance of NAD and NADP, and is a key enzyme in the biosynthesis of NADP. Catalyzes specifically the phosphorylation on 2'-hydroxyl of the adenosine moiety of NAD to yield NADP. This Methanosphaera stadtmanae (strain ATCC 43021 / DSM 3091 / JCM 11832 / MCB-3) protein is NAD kinase.